A 178-amino-acid polypeptide reads, in one-letter code: Large ribosomal subunit protein bL25 (178 aa).

Belongs to the bacterial ribosomal protein bL25 family. CTC subfamily. Part of the 50S ribosomal subunit; part of the 5S rRNA/L5/L18/L25 subcomplex. Contacts the 5S rRNA. Binds to the 5S rRNA independently of L5 and L18.

In terms of biological role, this is one of the proteins that binds to the 5S RNA in the ribosome where it forms part of the central protuberance. The sequence is that of Large ribosomal subunit protein bL25 from Helicobacter pylori (strain ATCC 700392 / 26695) (Campylobacter pylori).